The primary structure comprises 436 residues: Enolase (436 aa).

Residues His159 and Glu168 each coordinate substrate. Catalysis depends on Glu211, which acts as the Proton donor. The Mg(2+) site is built by Asp246, Glu295, and Asp320. Residues Glu295 and Asp320 each contribute to the substrate site. Lys345 functions as the Proton acceptor in the catalytic mechanism. Substrate-binding positions include 372–375 (SHRS) and Lys396.

This sequence belongs to the enolase family. As to quaternary structure, homodimer. It depends on Mg(2+) as a cofactor.

The protein localises to the cytoplasm. The catalysed reaction is (2R)-2-phosphoglycerate = phosphoenolpyruvate + H2O. It functions in the pathway carbohydrate degradation; glycolysis; pyruvate from D-glyceraldehyde 3-phosphate: step 4/5. This chain is Enolase, found in Cunninghamella elegans.